A 173-amino-acid chain; its full sequence is Dirigent protein 8 (173 aa).

Positions 1-22 (MTNLILIFAAQILLFYAVASVG) are cleaved as a signal peptide. N69, N90, and N125 each carry an N-linked (GlcNAc...) asparagine glycan.

Belongs to the plant dirigent protein family. Homodimer.

The protein resides in the secreted. The protein localises to the extracellular space. It localises to the apoplast. In terms of biological role, dirigent proteins impart stereoselectivity on the phenoxy radical-coupling reaction, yielding optically active lignans from two molecules of coniferyl alcohol in the biosynthesis of lignans, flavonolignans, and alkaloids and thus plays a central role in plant secondary metabolism. The protein is Dirigent protein 8 (DIR8) of Arabidopsis thaliana (Mouse-ear cress).